Reading from the N-terminus, the 309-residue chain is Aspartate carbamoyltransferase catalytic subunit (309 aa).

Positions 48 and 49 each coordinate carbamoyl phosphate. Lys-76 provides a ligand contact to L-aspartate. 3 residues coordinate carbamoyl phosphate: Arg-98, His-128, and Gln-131. The L-aspartate site is built by Arg-161 and Arg-211. The carbamoyl phosphate site is built by Ala-250 and Pro-251.

This sequence belongs to the aspartate/ornithine carbamoyltransferase superfamily. ATCase family. As to quaternary structure, heterododecamer (2C3:3R2) of six catalytic PyrB chains organized as two trimers (C3), and six regulatory PyrI chains organized as three dimers (R2).

The catalysed reaction is carbamoyl phosphate + L-aspartate = N-carbamoyl-L-aspartate + phosphate + H(+). It functions in the pathway pyrimidine metabolism; UMP biosynthesis via de novo pathway; (S)-dihydroorotate from bicarbonate: step 2/3. Functionally, catalyzes the condensation of carbamoyl phosphate and aspartate to form carbamoyl aspartate and inorganic phosphate, the committed step in the de novo pyrimidine nucleotide biosynthesis pathway. This is Aspartate carbamoyltransferase catalytic subunit from Oceanobacillus iheyensis (strain DSM 14371 / CIP 107618 / JCM 11309 / KCTC 3954 / HTE831).